We begin with the raw amino-acid sequence, 307 residues long: 4-hydroxythreonine-4-phosphate dehydrogenase (307 aa).

Positions 126 and 127 each coordinate substrate. 3 residues coordinate a divalent metal cation: histidine 156, histidine 195, and histidine 251. Substrate-binding residues include lysine 259, asparagine 268, and arginine 277.

It belongs to the PdxA family. In terms of assembly, homodimer. Zn(2+) serves as cofactor. The cofactor is Mg(2+). Co(2+) is required as a cofactor.

It is found in the cytoplasm. The catalysed reaction is 4-(phosphooxy)-L-threonine + NAD(+) = 3-amino-2-oxopropyl phosphate + CO2 + NADH. Its pathway is cofactor biosynthesis; pyridoxine 5'-phosphate biosynthesis; pyridoxine 5'-phosphate from D-erythrose 4-phosphate: step 4/5. In terms of biological role, catalyzes the NAD(P)-dependent oxidation of 4-(phosphooxy)-L-threonine (HTP) into 2-amino-3-oxo-4-(phosphooxy)butyric acid which spontaneously decarboxylates to form 3-amino-2-oxopropyl phosphate (AHAP). The polypeptide is 4-hydroxythreonine-4-phosphate dehydrogenase (Helicobacter pylori (strain J99 / ATCC 700824) (Campylobacter pylori J99)).